Reading from the N-terminus, the 159-residue chain is Transcription repressor OFP6 (159 aa).

Residues 39–60 form a disordered region; the sequence is PKRPSSTYRHCHSSISSATPSS. A compositionally biased stretch (low complexity) spans 51–60; it reads SSISSATPSS. Residues 70–129 enclose the OVATE domain; that stretch reads VEKDSDDPYLDFRQSMLQMILENQIYSKDELRELLQCFLSLNSHYHHGIIVRAFSEIWED.

As to quaternary structure, interacts with KNAT1 and KNAT7. Expressed in roots, shoots, rosette and cauline leaves, stems, flower buds and siliques.

Its subcellular location is the nucleus. Its function is as follows. Transcriptional repressor that regulates multiple aspects of plant growth and development through the regulation of BEL1-LIKE (BLH) and KNOX TALE (KNAT) homeodomain transcription factors. The chain is Transcription repressor OFP6 (OFP6) from Arabidopsis thaliana (Mouse-ear cress).